Here is a 112-residue protein sequence, read N- to C-terminus: Probable prefoldin subunit 1 (112 aa).

This sequence belongs to the prefoldin subunit beta family. Heterohexamer of two PFD-alpha type and four PFD-beta type subunits.

Binds specifically to cytosolic chaperonin (c-CPN) and transfers target proteins to it. Binds to nascent polypeptide chain and promotes folding in an environment in which there are many competing pathways for nonnative proteins. The sequence is that of Probable prefoldin subunit 1 from Schizosaccharomyces pombe (strain 972 / ATCC 24843) (Fission yeast).